The primary structure comprises 342 residues: L-threonine 3-dehydrogenase (342 aa).

Residue Cys38 participates in Zn(2+) binding. Residues Thr40 and His43 each act as charge relay system in the active site. Zn(2+)-binding residues include His63 and Glu64. Residues Ile175, Asp195, Arg200, 263-265, and 287-288 each bind NAD(+); these read LGI and VY.

This sequence belongs to the zinc-containing alcohol dehydrogenase family. As to quaternary structure, homotetramer. It depends on Zn(2+) as a cofactor.

It localises to the cytoplasm. The catalysed reaction is L-threonine + NAD(+) = (2S)-2-amino-3-oxobutanoate + NADH + H(+). It participates in amino-acid degradation; L-threonine degradation via oxydo-reductase pathway; glycine from L-threonine: step 1/2. In terms of biological role, catalyzes the NAD(+)-dependent oxidation of L-threonine to 2-amino-3-ketobutyrate. This is L-threonine 3-dehydrogenase from Ruegeria pomeroyi (strain ATCC 700808 / DSM 15171 / DSS-3) (Silicibacter pomeroyi).